A 405-amino-acid chain; its full sequence is Solute carrier family 35 member E2B (405 aa).

The segment at M1 to S28 is disordered. The next 10 membrane-spanning stretches (helical) occupy residues L81–G101, M106–P126, F142–V162, V167–S187, T195–A215, S219–F241, A264–G284, V296–A316, F326–G346, and N347–Y367. The segment at S380–P405 is disordered.

The protein belongs to the TPT transporter family. SLC35E subfamily.

It is found in the membrane. In terms of biological role, putative transporter. The chain is Solute carrier family 35 member E2B (SLC35E2B) from Homo sapiens (Human).